The chain runs to 1863 residues: E3 ubiquitin-protein ligase ubr3 (1863 aa).

Residues 80-151 (TLCGLVWTAN…ESGFCNRHRL (72 aa)) form a UBR-type zinc finger. 3 disordered regions span residues 302 to 330 (LDDS…SSTK), 970 to 995 (PEVE…SATF), and 1128 to 1152 (IPPK…RARE). 2 stretches are compositionally biased toward basic and acidic residues: residues 971-984 (EVER…ERET) and 1134-1152 (SPGD…RARE). The segment at 1270–1328 (DSSCLQSVSIGWDGGVYVQTCGHTLHIDCHKSYMESLRNDQVLQGISVDKGEFTCPLCR) adopts an RING-type; degenerate zinc-finger fold.

Belongs to the E3 ubiquitin-protein ligase UBR1-like family.

It carries out the reaction S-ubiquitinyl-[E2 ubiquitin-conjugating enzyme]-L-cysteine + [acceptor protein]-L-lysine = [E2 ubiquitin-conjugating enzyme]-L-cysteine + N(6)-ubiquitinyl-[acceptor protein]-L-lysine.. It functions in the pathway protein modification; protein ubiquitination. In terms of biological role, E3 ubiquitin-protein ligase which is a component of the N-end rule pathway. Recognizes and binds to proteins bearing specific N-terminal residues, leading to their ubiquitination and subsequent degradation. Positively regulates hedgehog/shh-signaling pathways that function in eye development, neuronal specification and somite development. Activation of shh up-regulates transcription of ubr3, which in turn promotes hedgehog/shh signaling possibly by controlling negative regulators such as Kif7. The polypeptide is E3 ubiquitin-protein ligase ubr3 (Danio rerio (Zebrafish)).